Here is a 639-residue protein sequence, read N- to C-terminus: 1-deoxy-D-xylulose-5-phosphate synthase (639 aa).

Residues histidine 79 and 120–122 contribute to the thiamine diphosphate site; that span reads AHS. Aspartate 151 is a Mg(2+) binding site. Thiamine diphosphate contacts are provided by residues 152 to 153, asparagine 180, tyrosine 289, and glutamate 371; that span reads GA. Residue asparagine 180 coordinates Mg(2+).

Belongs to the transketolase family. DXPS subfamily. In terms of assembly, homodimer. The cofactor is Mg(2+). It depends on thiamine diphosphate as a cofactor.

The enzyme catalyses D-glyceraldehyde 3-phosphate + pyruvate + H(+) = 1-deoxy-D-xylulose 5-phosphate + CO2. Its pathway is metabolic intermediate biosynthesis; 1-deoxy-D-xylulose 5-phosphate biosynthesis; 1-deoxy-D-xylulose 5-phosphate from D-glyceraldehyde 3-phosphate and pyruvate: step 1/1. Its function is as follows. Catalyzes the acyloin condensation reaction between C atoms 2 and 3 of pyruvate and glyceraldehyde 3-phosphate to yield 1-deoxy-D-xylulose-5-phosphate (DXP). This Rhizorhabdus wittichii (strain DSM 6014 / CCUG 31198 / JCM 15750 / NBRC 105917 / EY 4224 / RW1) (Sphingomonas wittichii) protein is 1-deoxy-D-xylulose-5-phosphate synthase.